The sequence spans 580 residues: Efflux pump dotC (580 aa).

The span at Met-1 to Glu-34 shows a compositional bias: basic and acidic residues. The interval Met-1–Leu-45 is disordered. Asn-10 carries an N-linked (GlcNAc...) asparagine glycan. Acidic residues predominate over residues Glu-35–Ala-44. Residues Pro-49–Leu-69 form a helical membrane-spanning segment. An N-linked (GlcNAc...) asparagine glycan is attached at Asn-86. 13 consecutive transmembrane segments (helical) span residues Ala-89 to Trp-109, Ala-127 to Thr-147, Gly-153 to Leu-173, Gly-181 to Phe-201, Trp-209 to Leu-229, Phe-242 to Phe-262, Ser-275 to Val-295, Ala-318 to Leu-338, Pro-348 to Ala-368, Leu-380 to Phe-400, Leu-409 to Val-429, Thr-444 to Tyr-466, and Ser-519 to Val-539. Residues Lys-559–Ser-580 are disordered.

This sequence belongs to the major facilitator superfamily. TCR/Tet family.

The protein resides in the cell membrane. It is found in the vacuole membrane. Functionally, efflux pump; part of the gene cluster that mediates the biosynthesis of dothistromin (DOTH), a polyketide toxin very similar in structure to the aflatoxin precursor, versicolorin B. One function of dotC may be to transport early-stage dothistromin biosynthetic intermediates from the cytoplasm into vacuoles, thereby affecting the rate of dothistromin production. The chain is Efflux pump dotC from Dothistroma septosporum (strain NZE10 / CBS 128990) (Red band needle blight fungus).